The following is a 467-amino-acid chain: ATP synthase subunit beta, chloroplastic (467 aa).

149-156 serves as a coordination point for ATP; the sequence is GGAGVGKT.

This sequence belongs to the ATPase alpha/beta chains family. As to quaternary structure, F-type ATPases have 2 components, CF(1) - the catalytic core - and CF(0) - the membrane proton channel. CF(1) has five subunits: alpha(3), beta(3), gamma(1), delta(1), epsilon(1). CF(0) has four main subunits: a(1), b(1), b'(1) and c(9-12).

The protein localises to the plastid. The protein resides in the chloroplast thylakoid membrane. The catalysed reaction is ATP + H2O + 4 H(+)(in) = ADP + phosphate + 5 H(+)(out). Produces ATP from ADP in the presence of a proton gradient across the membrane. The catalytic sites are hosted primarily by the beta subunits. The polypeptide is ATP synthase subunit beta, chloroplastic (Cyanidioschyzon merolae (strain NIES-3377 / 10D) (Unicellular red alga)).